Reading from the N-terminus, the 218-residue chain is Glutathione S-transferase PM239X14 (218 aa).

In terms of domain architecture, GST N-terminal spans 2–85; the sequence is VTVKLYGMAY…YLVAKYGKGS (84 aa). Glutathione-binding positions include 12-13, 41-42, 55-56, and 69-70; these read ST, HK, VI, and ES. One can recognise a GST C-terminal domain in the interval 93-218; sequence DPKAYGLFEQ…LLRNSSKEFM (126 aa).

This sequence belongs to the GST superfamily. Phi family. Expressed in vegetative rosettes.

It localises to the cytoplasm. Its subcellular location is the cytosol. It catalyses the reaction RX + glutathione = an S-substituted glutathione + a halide anion + H(+). Its function is as follows. Specifically catalyzes the conjugation of synthetic 1-chloro-2,4-ditrobenzene to GSH. Also functions as a glutathione peroxidase, converting linoleate oxidation products into their corresponding hydroxyacids. This enzyme may thus serve to protect the cell from oxygen toxicity as well as from exogenous toxins such as herbicides. In Arabidopsis thaliana (Mouse-ear cress), this protein is Glutathione S-transferase PM239X14.